The sequence spans 146 residues: Hemoglobin subunit beta-2 (146 aa).

A Globin domain is found at 2–146 (KWTDKERAVI…VVSALGKQYC (145 aa)). Heme b-binding residues include H63 and H92.

It belongs to the globin family. In terms of assembly, heterotetramer of two alpha chains and two beta chains. Red blood cells.

Functionally, involved in oxygen transport from gills to the various peripheral tissues. The protein is Hemoglobin subunit beta-2 (hbb2) of Lycodes reticulatus (Arctic eelpout).